The primary structure comprises 213 residues: Thiamine import ATP-binding protein ThiQ (213 aa).

One can recognise an ABC transporter domain in the interval 1 to 212; sequence MIELNVTFDY…EQGRIVADQL (212 aa). Residue 31-38 coordinates ATP; the sequence is GESGAGKS.

This sequence belongs to the ABC transporter superfamily. Thiamine importer (TC 3.A.1.19.1) family. In terms of assembly, the complex is composed of two ATP-binding proteins (ThiQ), two transmembrane proteins (ThiP) and a solute-binding protein (ThiB).

Its subcellular location is the cell inner membrane. The catalysed reaction is thiamine(out) + ATP + H2O = thiamine(in) + ADP + phosphate + H(+). Its function is as follows. Part of the ABC transporter complex ThiBPQ involved in thiamine import. Responsible for energy coupling to the transport system. The chain is Thiamine import ATP-binding protein ThiQ from Haemophilus ducreyi (strain 35000HP / ATCC 700724).